A 338-amino-acid chain; its full sequence is Lipoate-protein ligase A (338 aa).

Residues 29–216 (PATQRVLFLW…AFFAHYGERV (188 aa)) form the BPL/LPL catalytic domain. ATP-binding positions include Arg71, 76–79 (GAVF), and Lys134. Lys134 contributes to the (R)-lipoate binding site.

This sequence belongs to the LplA family. As to quaternary structure, monomer.

Its subcellular location is the cytoplasm. It catalyses the reaction L-lysyl-[lipoyl-carrier protein] + (R)-lipoate + ATP = N(6)-[(R)-lipoyl]-L-lysyl-[lipoyl-carrier protein] + AMP + diphosphate + H(+). It functions in the pathway protein modification; protein lipoylation via exogenous pathway; protein N(6)-(lipoyl)lysine from lipoate: step 1/2. It participates in protein modification; protein lipoylation via exogenous pathway; protein N(6)-(lipoyl)lysine from lipoate: step 2/2. Functionally, catalyzes both the ATP-dependent activation of exogenously supplied lipoate to lipoyl-AMP and the transfer of the activated lipoyl onto the lipoyl domains of lipoate-dependent enzymes. This Salmonella typhimurium (strain LT2 / SGSC1412 / ATCC 700720) protein is Lipoate-protein ligase A.